The chain runs to 1357 residues: DNA-directed RNA polymerase subunit beta (1357 aa).

Belongs to the RNA polymerase beta chain family. In terms of assembly, the RNAP catalytic core consists of 2 alpha, 1 beta, 1 beta' and 1 omega subunit. When a sigma factor is associated with the core the holoenzyme is formed, which can initiate transcription.

It catalyses the reaction RNA(n) + a ribonucleoside 5'-triphosphate = RNA(n+1) + diphosphate. Functionally, DNA-dependent RNA polymerase catalyzes the transcription of DNA into RNA using the four ribonucleoside triphosphates as substrates. This is DNA-directed RNA polymerase subunit beta from Pseudomonas fluorescens (strain SBW25).